The primary structure comprises 158 residues: NADPH-dependent 7-cyano-7-deazaguanine reductase (158 aa).

The Thioimide intermediate role is filled by cysteine 56. The active-site Proton donor is the aspartate 63. Residues 78 to 80 and 97 to 98 contribute to the substrate site; these read LES and HE.

This sequence belongs to the GTP cyclohydrolase I family. QueF type 1 subfamily.

Its subcellular location is the cytoplasm. It catalyses the reaction 7-aminomethyl-7-carbaguanine + 2 NADP(+) = 7-cyano-7-deazaguanine + 2 NADPH + 3 H(+). It participates in tRNA modification; tRNA-queuosine biosynthesis. Catalyzes the NADPH-dependent reduction of 7-cyano-7-deazaguanine (preQ0) to 7-aminomethyl-7-deazaguanine (preQ1). The chain is NADPH-dependent 7-cyano-7-deazaguanine reductase from Nitrobacter hamburgensis (strain DSM 10229 / NCIMB 13809 / X14).